Consider the following 1582-residue polypeptide: ATP-binding cassette sub-family C member 8 (1582 aa).

The Extracellular segment spans residues 1 to 30; that stretch reads MPLAFCGTENHSAAYRVDQGVLNNGCFVDA. Cys6 and Cys26 are disulfide-bonded. A glycan (N-linked (GlcNAc...) asparagine) is linked at Asn10. The chain crosses the membrane as a helical span at residues 31–47; the sequence is LNVVPHVFLLFITFPIL. The Cytoplasmic segment spans residues 48–72; that stretch reads FIGWGSQSSKVHIHHSTWLHFPGHN. Residues 73-89 traverse the membrane as a helical segment; that stretch reads LRWILTFILLFVLVCEI. At 90–106 the chain is on the extracellular side; the sequence is AEGILSDGVTESRHLHL. The chain crosses the membrane as a helical span at residues 107 to 123; the sequence is YMPAGMAFMAAITSVVY. The Cytoplasmic portion of the chain corresponds to 124–136; sequence YHNIETSNFPKLL. A helical membrane pass occupies residues 137-153; the sequence is IALLIYWTLAFITKTIK. Residues 154–169 lie on the Extracellular side of the membrane; the sequence is FVKFYDHAIGFSQLRF. A helical membrane pass occupies residues 170–186; the sequence is CLTGLLVILYGMLLLVE. Residues 187-303 are Cytoplasmic-facing; sequence VNVIRVRRYV…AFGRRLVLSS (117 aa). One can recognise an ABC transmembrane type-1 1 domain in the interval 299 to 602; sequence LVLSSTFRIL…LSSVVRSTVK (304 aa). The chain crosses the membrane as a helical span at residues 304–319; that stretch reads TFRILADLLGFAGPLC. The Extracellular portion of the chain corresponds to 320-356; that stretch reads IFGIVDHLGKENHVFQPKTQFLGVYFVSSQEFLGNAY. A helical membrane pass occupies residues 357–372; that stretch reads VLAVLLFLALLLQRTF. At 373–438 the chain is on the cytoplasmic side; the sequence is LQASYYVAIE…MWFFFLCPNL (66 aa). A helical membrane pass occupies residues 439-454; that stretch reads WAMPVQIIVGVILLYY. Over 455-460 the chain is Extracellular; sequence ILGVSA. Residues 461 to 473 form a helical membrane-spanning segment; it reads LIGAAVIILLAPV. Residues 474–541 are Cytoplasmic-facing; that stretch reads QYFVATKLSQ…SLRAFAVYTS (68 aa). The helical transmembrane segment at 542–557 threads the bilayer; it reads ISIFMNTAIPIAAVLI. The Extracellular portion of the chain corresponds to 558–576; it reads TFVGHVSFFKESDFSPSVA. Residues 577 to 592 traverse the membrane as a helical segment; it reads FASLSLFHILVTPLFL. At 593-1013 the chain is on the cytoplasmic side; the sequence is LSSVVRSTVK…YLSSAGILLL (421 aa). The region spanning 679 to 930 is the ABC transporter 1 domain; it reads VQIIGGFFTW…ECQLFEHWKT (252 aa). Residues Trp688, Gly716, Ser720, and Ser721 each coordinate ATP. Ser720 lines the Mg(2+) pocket. The segment at 741-768 is disordered; that stretch reads SSLPDSEGEDPSNPERETAADSDARSRG. The segment covering 753 to 766 has biased composition (basic and acidic residues); the sequence is NPERETAADSDARS. Gln775 contributes to the Mg(2+) binding site. Basic and acidic residues predominate over residues 939-950; sequence LEKETVMERKAP. Positions 939–962 are disordered; the sequence is LEKETVMERKAPEPSQGLPRAMSS. The ABC transmembrane type-1 2 domain occupies 1013–1307; the sequence is LSLLVFSQLL…MVRNLADMEI (295 aa). A helical membrane pass occupies residues 1014–1031; the sequence is SLLVFSQLLKHMVLVAID. The Extracellular portion of the chain corresponds to 1032 to 1067; the sequence is YWLAKWTDSALVLSPAARNCSLSQECALDQSVYAMV. Residue Asn1050 is glycosylated (N-linked (GlcNAc...) asparagine). A helical membrane pass occupies residues 1068-1084; that stretch reads FTVLCSLGIALCLVTSV. Residues 1085 to 1143 are Cytoplasmic-facing; sequence TVEWTGLKVAKRLHRSLLNRIILAPMRFFETTPLGSILNRFSSDCNTIDQHIPSTLECL. The helical transmembrane segment at 1144–1161 threads the bilayer; sequence SRSTLLCVSALAVISYVT. Position 1162 (Pro1162) is a topological domain, extracellular. Residues 1163–1175 traverse the membrane as a helical segment; that stretch reads VFLVALLPLAVVC. Topologically, residues 1176 to 1249 are cytoplasmic; sequence YFIQKYFRVA…FLTAANRWLE (74 aa). A helical membrane pass occupies residues 1250–1265; it reads VRMEYIGACVVLIAAA. Residues 1266–1281 are Extracellular-facing; it reads TSISNSLHRELSAGLV. The chain crosses the membrane as a helical span at residues 1282-1297; that stretch reads GLGLTYALMVSNYLNW. Topologically, residues 1298–1582 are cytoplasmic; the sequence is MVRNLADMEI…VFASFVRADK (285 aa). The ABC transporter 2 domain occupies 1345 to 1579; that stretch reads IQIQNLSVRY…KDSVFASFVR (235 aa). Residues Thr1381, Gly1382, Gly1384, Lys1385, Ser1386, and Ser1387 each contribute to the ADP site. Ser1483 serves as a coordination point for ATP.

The protein belongs to the ABC transporter superfamily. ABCC family. Conjugate transporter (TC 3.A.1.208) subfamily. As to quaternary structure, forms an heterooctamer with KCNJ11; four ABCC8/SUR1 molecules interact with one KCNJ11 homotetramer.

It is found in the cell membrane. With respect to regulation, KATP channels are regulated by cytoplasmic ATP/ADP ratios; ATP inhibits the channel by closing the pore, while ADP activates the channel. Activated by phosphatidylinositol 4,5-biphosphate (PtdIns(4,5)P2). Its function is as follows. Regulator subunit of pancreatic ATP-sensitive potassium channel (KATP), playing a major role in the regulation of insulin release. In pancreatic cells, it forms KATP channels with KCNJ11; KCNJ11 forms the channel pore while ABCC8 is required for activation and regulation. This chain is ATP-binding cassette sub-family C member 8 (Abcc8), found in Rattus norvegicus (Rat).